The following is a 115-amino-acid chain: NAD(P)H-quinone oxidoreductase subunit M, organellar chromatophore (115 aa).

This sequence belongs to the complex I NdhM subunit family. As to quaternary structure, NDH-1 can be composed of about 15 different subunits; different subcomplexes with different compositions have been identified which probably have different functions.

It is found in the plastid. The protein resides in the organellar chromatophore thylakoid membrane. It carries out the reaction a plastoquinone + NADH + (n+1) H(+)(in) = a plastoquinol + NAD(+) + n H(+)(out). It catalyses the reaction a plastoquinone + NADPH + (n+1) H(+)(in) = a plastoquinol + NADP(+) + n H(+)(out). Functionally, NDH-1 shuttles electrons from an unknown electron donor, via FMN and iron-sulfur (Fe-S) centers, to quinones in the respiratory and/or the photosynthetic chain. The immediate electron acceptor for the enzyme in this species is believed to be plastoquinone. Couples the redox reaction to proton translocation, and thus conserves the redox energy in a proton gradient. The protein is NAD(P)H-quinone oxidoreductase subunit M, organellar chromatophore of Paulinella chromatophora.